A 273-amino-acid polypeptide reads, in one-letter code: Ribonuclease Z (273 aa).

Histidine 61, histidine 63, histidine 146, aspartate 169, and histidine 233 together coordinate Zn(2+).

The protein belongs to the RNase Z family. In terms of assembly, homodimer. It depends on Zn(2+) as a cofactor.

The catalysed reaction is Endonucleolytic cleavage of RNA, removing extra 3' nucleotides from tRNA precursor, generating 3' termini of tRNAs. A 3'-hydroxy group is left at the tRNA terminus and a 5'-phosphoryl group is left at the trailer molecule.. Functionally, zinc phosphodiesterase, which displays some tRNA 3'-processing endonuclease activity. Probably involved in tRNA maturation, by removing a 3'-trailer from precursor tRNA. The polypeptide is Ribonuclease Z (Mycobacterium tuberculosis (strain ATCC 25177 / H37Ra)).